The following is a 170-amino-acid chain: Ribosome maturation factor RimM (170 aa).

Residues 98–170 enclose the PRC barrel domain; sequence PDEYYWVDLE…LIVVDWDPDF (73 aa).

The protein belongs to the RimM family. Binds ribosomal protein uS19.

The protein localises to the cytoplasm. An accessory protein needed during the final step in the assembly of 30S ribosomal subunit, possibly for assembly of the head region. Essential for efficient processing of 16S rRNA. May be needed both before and after RbfA during the maturation of 16S rRNA. It has affinity for free ribosomal 30S subunits but not for 70S ribosomes. This is Ribosome maturation factor RimM from Xanthomonas axonopodis pv. citri (strain 306).